Reading from the N-terminus, the 366-residue chain is Transaldolase (366 aa).

The active-site Schiff-base intermediate with substrate is the Lys-140.

It belongs to the transaldolase family. Type 2 subfamily.

The protein resides in the cytoplasm. The enzyme catalyses D-sedoheptulose 7-phosphate + D-glyceraldehyde 3-phosphate = D-erythrose 4-phosphate + beta-D-fructose 6-phosphate. It participates in carbohydrate degradation; pentose phosphate pathway; D-glyceraldehyde 3-phosphate and beta-D-fructose 6-phosphate from D-ribose 5-phosphate and D-xylulose 5-phosphate (non-oxidative stage): step 2/3. Functionally, transaldolase is important for the balance of metabolites in the pentose-phosphate pathway. In Saccharopolyspora erythraea (strain ATCC 11635 / DSM 40517 / JCM 4748 / NBRC 13426 / NCIMB 8594 / NRRL 2338), this protein is Transaldolase.